The following is a 310-amino-acid chain: Glutamyl-Q tRNA(Asp) synthetase (310 aa).

L-glutamate-binding positions include 24–28 (RFAPS) and E60. The 'HIGH' region motif lies at 27–37 (PSPSGPLHFGS). 4 residues coordinate Zn(2+): C116, C118, Y130, and C134. Y187 and R205 together coordinate L-glutamate. A 'KMSKS' region motif is present at residues 243-247 (KLSKQ). K246 contacts ATP.

The protein belongs to the class-I aminoacyl-tRNA synthetase family. GluQ subfamily. Zn(2+) is required as a cofactor.

Catalyzes the tRNA-independent activation of glutamate in presence of ATP and the subsequent transfer of glutamate onto a tRNA(Asp). Glutamate is transferred on the 2-amino-5-(4,5-dihydroxy-2-cyclopenten-1-yl) moiety of the queuosine in the wobble position of the QUC anticodon. The protein is Glutamyl-Q tRNA(Asp) synthetase of Photobacterium profundum (strain SS9).